A 95-amino-acid chain; its full sequence is uncharacterized protein (95 aa).

An N-terminal signal peptide occupies residues 1–22; the sequence is MLPGFTMIITSLLLTFFREVEH. Residues 23 to 52 lie on the Extracellular side of the membrane; it reads LLPECLTITNTPQRTLVLIQRFTLLQKVMT. Residues 53 to 69 form a helical membrane-spanning segment; the sequence is IHLLLSIGTLGSLFTLH. Residues 70-95 are Cytoplasmic-facing; the sequence is PQLLKTNLLQKLHKELNSNLDYLISC.

The protein resides in the host membrane. This is an uncharacterized protein from Acidianus bottle-shaped virus (isolate Italy/Pozzuoli) (ABV).